The primary structure comprises 476 residues: Bifunctional protein HldE (476 aa).

The tract at residues 1 to 319 (MKLTLPDYDQ…EAIYGSQDSG (319 aa)) is ribokinase. 195 to 198 (NLSE) is an ATP binding site. The active site involves aspartate 264. The cytidylyltransferase stretch occupies residues 344–476 (MTNGCFDILH…IIEAIRGGKG (133 aa)).

In the N-terminal section; belongs to the carbohydrate kinase PfkB family. The protein in the C-terminal section; belongs to the cytidylyltransferase family. Homodimer.

The catalysed reaction is D-glycero-beta-D-manno-heptose 7-phosphate + ATP = D-glycero-beta-D-manno-heptose 1,7-bisphosphate + ADP + H(+). It catalyses the reaction D-glycero-beta-D-manno-heptose 1-phosphate + ATP + H(+) = ADP-D-glycero-beta-D-manno-heptose + diphosphate. It participates in nucleotide-sugar biosynthesis; ADP-L-glycero-beta-D-manno-heptose biosynthesis; ADP-L-glycero-beta-D-manno-heptose from D-glycero-beta-D-manno-heptose 7-phosphate: step 1/4. It functions in the pathway nucleotide-sugar biosynthesis; ADP-L-glycero-beta-D-manno-heptose biosynthesis; ADP-L-glycero-beta-D-manno-heptose from D-glycero-beta-D-manno-heptose 7-phosphate: step 3/4. Functionally, catalyzes the phosphorylation of D-glycero-D-manno-heptose 7-phosphate at the C-1 position to selectively form D-glycero-beta-D-manno-heptose-1,7-bisphosphate. In terms of biological role, catalyzes the ADP transfer from ATP to D-glycero-beta-D-manno-heptose 1-phosphate, yielding ADP-D-glycero-beta-D-manno-heptose. This is Bifunctional protein HldE from Photobacterium profundum (strain SS9).